The chain runs to 186 residues: Putative 5'(3')-deoxyribonucleotidase (186 aa).

Catalysis depends on D6, which acts as the Nucleophile. 3 residues coordinate Mg(2+): D6, D8, and D137. The active-site Proton donor is the D8.

Belongs to the 5'(3')-deoxyribonucleotidase family. Mg(2+) is required as a cofactor.

Its function is as follows. Dephosphorylates the 5' and 2'(3')-phosphates of deoxyribonucleotides. In Bordetella bronchiseptica (strain ATCC BAA-588 / NCTC 13252 / RB50) (Alcaligenes bronchisepticus), this protein is Putative 5'(3')-deoxyribonucleotidase.